The following is a 452-amino-acid chain: GTPase Der (452 aa).

EngA-type G domains follow at residues 4–169 (PIVA…PTTE) and 177–352 (IKVA…ASHR). GTP is bound by residues 10–17 (GRPNVGKS), 57–61 (DTGGL), 120–123 (NKCE), 183–190 (GRPNVGKS), 230–234 (DTAGI), and 295–298 (NKWD). The KH-like domain occupies 353–438 (RRVSTAVINE…PIRLIWRGKS (86 aa)).

This sequence belongs to the TRAFAC class TrmE-Era-EngA-EngB-Septin-like GTPase superfamily. EngA (Der) GTPase family. Associates with the 50S ribosomal subunit.

Its function is as follows. GTPase that plays an essential role in the late steps of ribosome biogenesis. The protein is GTPase Der of Gloeothece citriformis (strain PCC 7424) (Cyanothece sp. (strain PCC 7424)).